The sequence spans 326 residues: Protoheme IX farnesyltransferase (326 aa).

Transmembrane regions (helical) follow at residues 35–55 (LIPL…GWPL), 60–80 (LICT…LNCL), 106–126 (TAFI…VSGV), 129–149 (LAAG…TALL), 157–177 (IVVG…AATG), 185–205 (WLFA…ALLL), 238–258 (VLLS…YGLM), and 289–309 (WSIL…SALA).

This sequence belongs to the UbiA prenyltransferase family. Protoheme IX farnesyltransferase subfamily.

It localises to the cell inner membrane. It catalyses the reaction heme b + (2E,6E)-farnesyl diphosphate + H2O = Fe(II)-heme o + diphosphate. It functions in the pathway porphyrin-containing compound metabolism; heme O biosynthesis; heme O from protoheme: step 1/1. In terms of biological role, converts heme B (protoheme IX) to heme O by substitution of the vinyl group on carbon 2 of heme B porphyrin ring with a hydroxyethyl farnesyl side group. In Synechococcus sp. (strain CC9902), this protein is Protoheme IX farnesyltransferase.